The sequence spans 342 residues: Holliday junction branch migration complex subunit RuvB (342 aa).

Positions 1 to 179 (MTNILSPEKS…FGIPMRLNFY (179 aa)) are large ATPase domain (RuvB-L). Residues Ile-18, Arg-19, Gly-60, Lys-63, Thr-64, Thr-65, 126 to 128 (EDF), Arg-169, Tyr-179, and Arg-216 contribute to the ATP site. Residue Thr-64 coordinates Mg(2+). The tract at residues 180 to 250 (NTEELKQVLN…ICDFGLKRLT (71 aa)) is small ATPAse domain (RuvB-S). The interval 253 to 342 (SIGLDSNDYR…HQFNILNENE (90 aa)) is head domain (RuvB-H). Positions 289, 308, and 313 each coordinate DNA.

It belongs to the RuvB family. Homohexamer. Forms an RuvA(8)-RuvB(12)-Holliday junction (HJ) complex. HJ DNA is sandwiched between 2 RuvA tetramers; dsDNA enters through RuvA and exits via RuvB. An RuvB hexamer assembles on each DNA strand where it exits the tetramer. Each RuvB hexamer is contacted by two RuvA subunits (via domain III) on 2 adjacent RuvB subunits; this complex drives branch migration. In the full resolvosome a probable DNA-RuvA(4)-RuvB(12)-RuvC(2) complex forms which resolves the HJ.

It is found in the cytoplasm. The enzyme catalyses ATP + H2O = ADP + phosphate + H(+). Functionally, the RuvA-RuvB-RuvC complex processes Holliday junction (HJ) DNA during genetic recombination and DNA repair, while the RuvA-RuvB complex plays an important role in the rescue of blocked DNA replication forks via replication fork reversal (RFR). RuvA specifically binds to HJ cruciform DNA, conferring on it an open structure. The RuvB hexamer acts as an ATP-dependent pump, pulling dsDNA into and through the RuvAB complex. RuvB forms 2 homohexamers on either side of HJ DNA bound by 1 or 2 RuvA tetramers; 4 subunits per hexamer contact DNA at a time. Coordinated motions by a converter formed by DNA-disengaged RuvB subunits stimulates ATP hydrolysis and nucleotide exchange. Immobilization of the converter enables RuvB to convert the ATP-contained energy into a lever motion, pulling 2 nucleotides of DNA out of the RuvA tetramer per ATP hydrolyzed, thus driving DNA branch migration. The RuvB motors rotate together with the DNA substrate, which together with the progressing nucleotide cycle form the mechanistic basis for DNA recombination by continuous HJ branch migration. Branch migration allows RuvC to scan DNA until it finds its consensus sequence, where it cleaves and resolves cruciform DNA. This chain is Holliday junction branch migration complex subunit RuvB, found in Rickettsia typhi (strain ATCC VR-144 / Wilmington).